The chain runs to 543 residues: Keratin, type II cytoskeletal 75 (543 aa).

Over residues 1 to 16 (MSRQSTITFQTSSRRG) the composition is skewed to polar residues. The disordered stretch occupies residues 1–48 (MSRQSTITFQTSSRRGFSTASATTPATSRSRFSSASVTHSPAGSGGLG). Positions 1 to 144 (MSRQSTITFQ…DPNIQRVRKE (144 aa)) are head. Residues 17-36 (FSTASATTPATSRSRFSSAS) show a composition bias toward low complexity. The coil 1A stretch occupies residues 145–180 (EREQIKTLNNKFASFIDKVRFLEQQNKVLETKWSLL). In terms of domain architecture, IF rod spans 145–458 (EREQIKTLNN…KLLEGEECRL (314 aa)). Residues 181 to 199 (QEQGTRTVRQSLEPFFEAY) are linker 1. Residues 200-292 (ITDLRRQLDS…LFEAELCQMQ (93 aa)) form a coil 1B region. The linker 12 stretch occupies residues 293-315 (TRVSDTSVVLSMDNNRSLDLDSI). The segment at 316-454 (IAEVKAQYEE…ATYRKLLEGE (139 aa)) is coil 2. Residues 455-543 (ECRLSGEGVS…TSSSRKSYKH (89 aa)) are tail. The tract at residues 511–543 (SSFSNSSSRGLGGSGSSFKFVSTTSSSRKSYKH) is disordered. Low complexity predominate over residues 526–543 (SSFKFVSTTSSSRKSYKH).

The protein belongs to the intermediate filament family. As to quaternary structure, heterodimer of a type I and a type II keratin. May associate with KRT17.

Its function is as follows. Plays a central role in hair and nail formation. Essential component of keratin intermediate filaments in the companion layer of the hair follicle. This chain is Keratin, type II cytoskeletal 75 (KRT75), found in Bos taurus (Bovine).